A 240-amino-acid chain; its full sequence is UPF0309 protein in nagA 3'region (240 aa).

One can recognise an SIS domain in the interval 31 to 206 (IVKRLVQGGI…CAQIIEILHE (176 aa)).

It belongs to the UPF0309 family.

This Lysinibacillus sphaericus (Bacillus sphaericus) protein is UPF0309 protein in nagA 3'region.